The sequence spans 1132 residues: Eisosome protein SEG2 (1132 aa).

Polar residues predominate over residues 76–95 (KRTSSLPNQGHKNTSNNSAG). Disordered regions lie at residues 76–142 (KRTS…GNSG) and 171–225 (RYSL…NDYH). Positions 101–113 (AHEDAETTFREFG) are enriched in basic and acidic residues. Polar residues predominate over residues 115 to 142 (KQSSKVLNISSSTGQNSKSRTTSLGNSG). Phosphoserine is present on S137. The segment covering 208–225 (GSQEKKSESGGKSKNDYH) has biased composition (basic and acidic residues). A Phosphoserine modification is found at S280. The disordered stretch occupies residues 404 to 429 (PTLSEPKPAYVPPEDVEKEPSTLSNQ). Residues S504 and S507 each carry the phosphoserine modification. 2 disordered regions span residues 510–938 (GGNQ…FRSM) and 961–993 (EKKE…THTT). Residue K526 forms a Glycyl lysine isopeptide (Lys-Gly) (interchain with G-Cter in ubiquitin) linkage. 2 stretches are compositionally biased toward acidic residues: residues 550–561 (DQEEALSDNEPE) and 595–644 (KDDD…DDEY). Position 556 is a phosphoserine (S556). Polar residues-rich tracts occupy residues 688–699 (SENAEVSQSGTN) and 710–735 (YLTN…TDTT). Residue K743 forms a Glycyl lysine isopeptide (Lys-Gly) (interchain with G-Cter in ubiquitin) linkage. Residues 761 to 773 (SSTSSSIYSIETS) are compositionally biased toward low complexity. Composition is skewed to polar residues over residues 774–810 (PNID…SSHQ) and 827–845 (NRSC…TLSH). Residues 850–860 (PASDSSSSPPY) are compositionally biased toward low complexity. A compositionally biased stretch (basic and acidic residues) spans 916–930 (PPARKSSFEKERPAK). 2 positions are modified to phosphoserine: S980 and S1022.

Belongs to the SEG1 family. As to quaternary structure, component of eisosomes, large cytoplasmic protein assemblies that localize to specialized domains termed MCCs on the plasma membrane.

It localises to the cell membrane. Likely plays only a minor role in eisosome assembly. The chain is Eisosome protein SEG2 (SEG2) from Saccharomyces cerevisiae (strain ATCC 204508 / S288c) (Baker's yeast).